The sequence spans 1342 residues: DNA-directed RNA polymerase subunit beta (1342 aa).

It belongs to the RNA polymerase beta chain family. In terms of assembly, the RNAP catalytic core consists of 2 alpha, 1 beta, 1 beta' and 1 omega subunit. When a sigma factor is associated with the core the holoenzyme is formed, which can initiate transcription.

It carries out the reaction RNA(n) + a ribonucleoside 5'-triphosphate = RNA(n+1) + diphosphate. In terms of biological role, DNA-dependent RNA polymerase catalyzes the transcription of DNA into RNA using the four ribonucleoside triphosphates as substrates. The protein is DNA-directed RNA polymerase subunit beta of Yersinia pestis bv. Antiqua (strain Angola).